The following is a 147-amino-acid chain: Protein SprT-like (147 aa).

The SprT-like domain maps to 9 to 142 (AKVKEISLTY…CGKCRGKLIL (134 aa)). Residue H65 participates in Zn(2+) binding. E66 is a catalytic residue. Residue H69 participates in Zn(2+) binding.

It belongs to the SprT family. Zn(2+) serves as cofactor.

It is found in the cytoplasm. This Lactococcus lactis subsp. lactis (strain IL1403) (Streptococcus lactis) protein is Protein SprT-like (yciD).